The sequence spans 477 residues: MQVLHVCSEMFPLLKTGGLADVIGALPAAQIADGVDARVLLPAFPDIRRGVTDAQVVSRRDTFAGHITLLFGHYNGVGIYLIDAPHLYDRPGSPYHDTNLFAYTDNVLRFALLGWVGAEMASGLDPFWRPDVVHVHDWHAGLAPAYLAARGRPAKSVFTVHNLAYQGMFYAHHMNDIQLPWSFFNIHGLEFNGQISFLKAGLYYADHITAVSPTYAREITEPQFAYGMEGLLQQRHREGRLSGVLNGVDEKIWSPETDLLLASRYTRDTLEDKAENKSQLQIAMGLKVDDKVPLFAVVSRLTSQKGLDLVLEALPGLLEQGGQLALLGAGDPVLQEGFLAAAAEYPGQVGVQIGYHEAFSHRIMGGADVILVPSRFEPCGLTQLYGLKYGTLPLVRRTGGLADTVSDCSLENLADGVASGFVFEDSNAWSLLRAIRRAFVLWSRPSLWRFVQRQAMAMDFSWQVAAKSYRELYYRLK.

Lys15 contacts ADP-alpha-D-glucose.

The protein belongs to the glycosyltransferase 1 family. Bacterial/plant glycogen synthase subfamily.

It catalyses the reaction [(1-&gt;4)-alpha-D-glucosyl](n) + ADP-alpha-D-glucose = [(1-&gt;4)-alpha-D-glucosyl](n+1) + ADP + H(+). The protein operates within glycan biosynthesis; glycogen biosynthesis. Synthesizes alpha-1,4-glucan chains using ADP-glucose. The sequence is that of Glycogen synthase from Shigella flexneri.